The chain runs to 285 residues: MKVAADPDPSLVSQRDMEPEAAKDKDSFRNYTSGPLLDRVFATYKLMHTWQTVDFVRRKHAQFGGFSYKRMTVMEAVDMLDGLVDESDPDVDFPNSFHAFQTAEGIRKAHPDKDWFHLVGLLHDLGKVLALAGEPQWAVVGDTFPVGCRPQASVVFRDCTFQDNPDLQDPLYSTELGMYQPHCGLENVLMSWGHDEYMYRMMKFNKFALPPEAFYIIRFHSFYPWHKFGDYQQLCNEQDLAMLPWVQEFNKFDLYTKSSSLPDVAALRPYYQGLVDKYCPGILCW.

Positions 1-28 (MKVAADPDPSLVSQRDMEPEAAKDKDSF) are disordered. Basic and acidic residues predominate over residues 15–28 (RDMEPEAAKDKDSF). R29 is a substrate binding site. S33 carries the phosphoserine modification. A substrate-binding site is contributed by 85–87 (DES). Fe cation-binding residues include H98, H123, and D124. Residues K127 and 141–142 (GD) contribute to the substrate site. Positions 194, 220, and 253 each coordinate Fe cation. Residue 220-221 (HS) coordinates substrate.

It belongs to the myo-inositol oxygenase family. Fe cation is required as a cofactor.

It is found in the cytoplasm. The catalysed reaction is myo-inositol + O2 = D-glucuronate + H2O + H(+). It functions in the pathway polyol metabolism; myo-inositol degradation into D-glucuronate; D-glucuronate from myo-inositol: step 1/1. The polypeptide is Inositol oxygenase (MIOX) (Bos taurus (Bovine)).